Here is a 233-residue protein sequence, read N- to C-terminus: Large ribosomal subunit protein uL1 (233 aa).

It belongs to the universal ribosomal protein uL1 family. Part of the 50S ribosomal subunit.

Binds directly to 23S rRNA. The L1 stalk is quite mobile in the ribosome, and is involved in E site tRNA release. In terms of biological role, protein L1 is also a translational repressor protein, it controls the translation of the L11 operon by binding to its mRNA. This is Large ribosomal subunit protein uL1 from Shewanella sp. (strain MR-4).